The following is a 507-amino-acid chain: E3 SUMO-protein ligase PIAS4 (507 aa).

An N-acetylalanine modification is found at A2. A Glycyl lysine isopeptide (Lys-Gly) (interchain with G-Cter in SUMO2) cross-link involves residue K9. Residues 12 to 46 (VMSFRVSDLQMLLGFVGRSKSGLKHELVTRALQLV) form the SAP domain. The short motif at 20 to 24 (LQMLL) is the LXXLL motif element. K35 participates in a covalent cross-link: Glycyl lysine isopeptide (Lys-Gly) (interchain with G-Cter in SUMO); alternate. K35 is covalently cross-linked (Glycyl lysine isopeptide (Lys-Gly) (interchain with G-Cter in SUMO2); alternate). Residues K56, K59, K68, and K69 each participate in a glycyl lysine isopeptide (Lys-Gly) (interchain with G-Cter in SUMO2) cross-link. N6-acetyllysine is present on K107. The PINIT domain occupies 112–272 (LGRLPTKTLK…SVALYLVRQL (161 aa)). A Glycyl lysine isopeptide (Lys-Gly) (interchain with G-Cter in SUMO2) cross-link involves residue K118. Residue K128 forms a Glycyl lysine isopeptide (Lys-Gly) (interchain with G-Cter in SUMO) linkage. Residues 304–385 (PDSEIATTGV…LSKILSECEG (82 aa)) form an SP-RING-type zinc finger. Residues C335, H337, C358, and C361 each coordinate Zn(2+). Positions 426 to 507 (APASSTPGIG…PFQKGLVPAC (82 aa)) are disordered. Residues 434-450 (IGSGLSGPGSAGSGAGA) show a composition bias toward gly residues. Residues 474 to 489 (SEDEDEDEDDDEDEDE) are compositionally biased toward acidic residues.

This sequence belongs to the PIAS family. As to quaternary structure, interacts with AR, GATA2, LEF1, TP53 and STAT1 (IFNG-induced). Interacts with TICAM1. Interacts with MTA1. Interacts with PRDM1/Blimp-1. Interacts with TRIM32 upon treatment with UVB and TNF-alpha. (Microbial infection) Interacts ewith Moloney murine leukemia virus Capsid protein p30. Sumoylated. Lys-35 is the main site of sumoylation. Sumoylation is required for TCF4 sumoylation and transcriptional activation. Represses LEF1 transcriptional activity. SUMO1 is the preferred conjugate. In terms of processing, ubiquitinated by TRIM32 upon treatment with UVB and TNF-alpha. Widely expressed, with highest levels in testis. Also expressed in vascular endothelial cells, in primary keratinocytes and in the CNS, including cortex, olfactory bulb, spinal cord, thalamus and trigeminal ganglion. Low expression, if any, in liver and lung.

It localises to the nucleus. The protein localises to the PML body. The catalysed reaction is S-ubiquitinyl-[E2 ubiquitin-conjugating enzyme]-L-cysteine + [acceptor protein]-L-lysine = [E2 ubiquitin-conjugating enzyme]-L-cysteine + N(6)-ubiquitinyl-[acceptor protein]-L-lysine.. Its pathway is protein modification; protein sumoylation. In terms of biological role, functions as an E3-type small ubiquitin-like modifier (SUMO) ligase, stabilizing the interaction between UBE2I and the substrate, and as a SUMO-tethering factor. Mediates sumoylation of ALKBH5, AXIN1, CEBPA, KLF8, GATA2, PARK7, HERC2, MYB, TCF4 and RNF168. Plays a crucial role as a transcriptional coregulation in various cellular pathways, including the STAT pathway, the p53/TP53 pathway, the Wnt pathway and the steroid hormone signaling pathway. Involved in gene silencing. In Wnt signaling, represses LEF1 and enhances TCF4 transcriptional activities through promoting their sumoylations. Enhances the sumoylation of MTA1 and may participate in its paralog-selective sumoylation. Binds to AT-rich DNA sequences, known as matrix or scaffold attachment regions (MARs/SARs). Catalyzes conjugation of SUMO2 to KAT5 in response to DNA damage, facilitating repair of DNA double-strand breaks (DSBs) via homologous recombination (HR). Mediates sumoylation of PARP1 in response to PARP1 trapping to chromatin. Mediates sumoylation of KLF8, repressiing KLF8 transcriptional activity and cell cycle progression into G(1) phase. Sumoylates ALKBH5 downstream of MAPK8/JNK1 and MAPK9/JNK2 in response to reactive oxygen species (ROS), inhibiting ALKBH5 RNA demethylase activity. The polypeptide is E3 SUMO-protein ligase PIAS4 (Pias4) (Mus musculus (Mouse)).